The chain runs to 196 residues: Ribonuclease HII (196 aa).

In terms of domain architecture, RNase H type-2 spans 15–196 (YIVAGIDEAG…RKSFRYSCFI (182 aa)). A divalent metal cation contacts are provided by D21, E22, and D112.

This sequence belongs to the RNase HII family. The cofactor is Mn(2+). Mg(2+) is required as a cofactor.

The protein localises to the cytoplasm. The catalysed reaction is Endonucleolytic cleavage to 5'-phosphomonoester.. In terms of biological role, endonuclease that specifically degrades the RNA of RNA-DNA hybrids. The polypeptide is Ribonuclease HII (Rickettsia canadensis (strain McKiel)).